A 186-amino-acid polypeptide reads, in one-letter code: Ribosome-recycling factor (186 aa).

The protein belongs to the RRF family.

It localises to the cytoplasm. Functionally, responsible for the release of ribosomes from messenger RNA at the termination of protein biosynthesis. May increase the efficiency of translation by recycling ribosomes from one round of translation to another. This Polaromonas sp. (strain JS666 / ATCC BAA-500) protein is Ribosome-recycling factor.